The following is a 424-amino-acid chain: Type II methyltransferase M.XorII (424 aa).

The 364-residue stretch at 4 to 367 (PIGIDLFAGA…GQIMKALRKK (364 aa)) folds into the SAM-dependent MTase C5-type domain. Residue cysteine 83 is part of the active site. The tract at residues 404–424 (RSRPVDRPAPRRHEERELVTA) is disordered. Over residues 406 to 424 (RPVDRPAPRRHEERELVTA) the composition is skewed to basic and acidic residues.

It belongs to the class I-like SAM-binding methyltransferase superfamily. C5-methyltransferase family.

It carries out the reaction a 2'-deoxycytidine in DNA + S-adenosyl-L-methionine = a 5-methyl-2'-deoxycytidine in DNA + S-adenosyl-L-homocysteine + H(+). A methylase that recognizes the double-stranded sequence 5'-CGATCG-3', methylates C-? on both strands and protects the DNA from cleavage by the XorII endonuclease. This is Type II methyltransferase M.XorII (xorIIM) from Xanthomonas oryzae pv. oryzae (strain KACC10331 / KXO85).